A 144-amino-acid polypeptide reads, in one-letter code: Benzoylsuccinyl-CoA thiolase subunit BbsA (144 aa).

4 residues coordinate Zn(2+): C40, C43, C54, and C57.

This sequence belongs to the BbsA family. Heterotetramer composed of two BbsA subunits and two BbsB subunits. BbsA forms homodimeric subcomplexes. Both BbsA and BbsB are essential for enzymatic activity.

The catalysed reaction is (S)-2-benzoylsuccinyl-CoA + CoA = benzoyl-CoA + succinyl-CoA. The protein operates within xenobiotic degradation; toluene degradation. Functionally, component of the BbsAB thiolase complex, which catalyzes the thiolytic cleavage of (S)-2-benzoylsuccinyl-CoA to succinyl-CoA and benzoyl-CoA, the final step of anaerobic toluene metabolism. The BbsA subunit critically contributes to an induced-fit process for productive binding of a CoA substrate into the active site of BbsB. The polypeptide is Benzoylsuccinyl-CoA thiolase subunit BbsA (Thauera aromatica).